The following is a 273-amino-acid chain: Exosome complex component Rrp42 (273 aa).

Belongs to the RNase PH family. Rrp42 subfamily. As to quaternary structure, component of the archaeal exosome complex. Forms a hexameric ring-like arrangement composed of 3 Rrp41-Rrp42 heterodimers. The hexameric ring associates with a trimer of Rrp4 and/or Csl4 subunits.

Its subcellular location is the cytoplasm. Its function is as follows. Non-catalytic component of the exosome, which is a complex involved in RNA degradation. Contributes to the structuring of the Rrp41 active site. The polypeptide is Exosome complex component Rrp42 (Thermococcus gammatolerans (strain DSM 15229 / JCM 11827 / EJ3)).